We begin with the raw amino-acid sequence, 624 residues long: Chaperone protein HtpG (624 aa).

The interval 1 to 336 (MKGQETRGFQ…SSDLPLNVSR (336 aa)) is a; substrate-binding. The interval 337–552 (EILQDSTVTR…ADEMSTQMAK (216 aa)) is b. A c region spans residues 553-624 (LFAAAGQKVP…IRRMNQLLVS (72 aa)).

Belongs to the heat shock protein 90 family. As to quaternary structure, homodimer.

It is found in the cytoplasm. In terms of biological role, molecular chaperone. Has ATPase activity. The sequence is that of Chaperone protein HtpG from Shigella flexneri.